A 212-amino-acid polypeptide reads, in one-letter code: Glycerol-3-phosphate acyltransferase (212 aa).

5 helical membrane-spanning segments follow: residues 3-23, 51-71, 78-98, 115-135, and 139-159; these read ILLA…VIVS, KAAI…VWLA, DVAI…PVFF, AVHP…AFFF, and SLAA…LFGT.

It belongs to the PlsY family. In terms of assembly, probably interacts with PlsX.

It is found in the cell inner membrane. It catalyses the reaction an acyl phosphate + sn-glycerol 3-phosphate = a 1-acyl-sn-glycero-3-phosphate + phosphate. It participates in lipid metabolism; phospholipid metabolism. Functionally, catalyzes the transfer of an acyl group from acyl-phosphate (acyl-PO(4)) to glycerol-3-phosphate (G3P) to form lysophosphatidic acid (LPA). This enzyme utilizes acyl-phosphate as fatty acyl donor, but not acyl-CoA or acyl-ACP. The chain is Glycerol-3-phosphate acyltransferase from Burkholderia multivorans (strain ATCC 17616 / 249).